We begin with the raw amino-acid sequence, 249 residues long: Triosephosphate isomerase (249 aa).

9–11 contacts substrate; it reads NWK. Histidine 95 serves as the catalytic Electrophile. Catalysis depends on glutamate 167, which acts as the Proton acceptor. Residues glycine 173, serine 213, and 234–235 each bind substrate; that span reads GG.

It belongs to the triosephosphate isomerase family. In terms of assembly, homodimer.

The protein resides in the cytoplasm. The catalysed reaction is D-glyceraldehyde 3-phosphate = dihydroxyacetone phosphate. It functions in the pathway carbohydrate biosynthesis; gluconeogenesis. The protein operates within carbohydrate degradation; glycolysis; D-glyceraldehyde 3-phosphate from glycerone phosphate: step 1/1. Its function is as follows. Involved in the gluconeogenesis. Catalyzes stereospecifically the conversion of dihydroxyacetone phosphate (DHAP) to D-glyceraldehyde-3-phosphate (G3P). This Solibacter usitatus (strain Ellin6076) protein is Triosephosphate isomerase.